The following is a 267-amino-acid chain: NAD kinase 2 (267 aa).

Asp-52 acts as the Proton acceptor in catalysis. Residues 52 to 53, 124 to 125, Arg-151, Asp-153, 164 to 169, and Ala-188 contribute to the NAD(+) site; these read DA, NE, and TAYNKS.

The protein belongs to the NAD kinase family. A divalent metal cation serves as cofactor.

Its subcellular location is the cytoplasm. It catalyses the reaction NAD(+) + ATP = ADP + NADP(+) + H(+). Its function is as follows. Involved in the regulation of the intracellular balance of NAD and NADP, and is a key enzyme in the biosynthesis of NADP. Catalyzes specifically the phosphorylation on 2'-hydroxyl of the adenosine moiety of NAD to yield NADP. The protein is NAD kinase 2 of Bacillus cereus (strain ATCC 10987 / NRS 248).